The sequence spans 303 residues: Bifunctional protein FolD (303 aa).

NADP(+) contacts are provided by residues 175-177 (GVS) and Ile-243.

Belongs to the tetrahydrofolate dehydrogenase/cyclohydrolase family. In terms of assembly, homodimer.

It carries out the reaction (6R)-5,10-methylene-5,6,7,8-tetrahydrofolate + NADP(+) = (6R)-5,10-methenyltetrahydrofolate + NADPH. The catalysed reaction is (6R)-5,10-methenyltetrahydrofolate + H2O = (6R)-10-formyltetrahydrofolate + H(+). It functions in the pathway one-carbon metabolism; tetrahydrofolate interconversion. Functionally, catalyzes the oxidation of 5,10-methylenetetrahydrofolate to 5,10-methenyltetrahydrofolate and then the hydrolysis of 5,10-methenyltetrahydrofolate to 10-formyltetrahydrofolate. The chain is Bifunctional protein FolD from Xanthomonas oryzae pv. oryzae (strain PXO99A).